A 518-amino-acid polypeptide reads, in one-letter code: ATP synthase subunit alpha (518 aa).

169 to 176 (GDRQTGKT) serves as a coordination point for ATP.

The protein belongs to the ATPase alpha/beta chains family. F-type ATPases have 2 components, CF(1) - the catalytic core - and CF(0) - the membrane proton channel. CF(1) has five subunits: alpha(3), beta(3), gamma(1), delta(1), epsilon(1). CF(0) has three main subunits: a(1), b(2) and c(9-12). The alpha and beta chains form an alternating ring which encloses part of the gamma chain. CF(1) is attached to CF(0) by a central stalk formed by the gamma and epsilon chains, while a peripheral stalk is formed by the delta and b chains.

The protein localises to the cell membrane. The catalysed reaction is ATP + H2O + 4 H(+)(in) = ADP + phosphate + 5 H(+)(out). Functionally, produces ATP from ADP in the presence of a proton gradient across the membrane. The alpha chain is a regulatory subunit. The protein is ATP synthase subunit alpha of Mycoplasma genitalium (strain ATCC 33530 / DSM 19775 / NCTC 10195 / G37) (Mycoplasmoides genitalium).